We begin with the raw amino-acid sequence, 293 residues long: Phosphatidylserine decarboxylase proenzyme (293 aa).

Active-site charge relay system; for autoendoproteolytic cleavage activity residues include D88, H144, and S247. S247 serves as the catalytic Schiff-base intermediate with substrate; via pyruvic acid; for decarboxylase activity. At S247 the chain carries Pyruvic acid (Ser); by autocatalysis.

The protein belongs to the phosphatidylserine decarboxylase family. PSD-B subfamily. Prokaryotic type I sub-subfamily. Heterodimer of a large membrane-associated beta subunit and a small pyruvoyl-containing alpha subunit. Requires pyruvate as cofactor. Is synthesized initially as an inactive proenzyme. Formation of the active enzyme involves a self-maturation process in which the active site pyruvoyl group is generated from an internal serine residue via an autocatalytic post-translational modification. Two non-identical subunits are generated from the proenzyme in this reaction, and the pyruvate is formed at the N-terminus of the alpha chain, which is derived from the carboxyl end of the proenzyme. The autoendoproteolytic cleavage occurs by a canonical serine protease mechanism, in which the side chain hydroxyl group of the serine supplies its oxygen atom to form the C-terminus of the beta chain, while the remainder of the serine residue undergoes an oxidative deamination to produce ammonia and the pyruvoyl prosthetic group on the alpha chain. During this reaction, the Ser that is part of the protease active site of the proenzyme becomes the pyruvoyl prosthetic group, which constitutes an essential element of the active site of the mature decarboxylase.

The protein localises to the cell membrane. The catalysed reaction is a 1,2-diacyl-sn-glycero-3-phospho-L-serine + H(+) = a 1,2-diacyl-sn-glycero-3-phosphoethanolamine + CO2. Its pathway is phospholipid metabolism; phosphatidylethanolamine biosynthesis; phosphatidylethanolamine from CDP-diacylglycerol: step 2/2. Its function is as follows. Catalyzes the formation of phosphatidylethanolamine (PtdEtn) from phosphatidylserine (PtdSer). The sequence is that of Phosphatidylserine decarboxylase proenzyme from Xylella fastidiosa (strain M23).